Here is a 234-residue protein sequence, read N- to C-terminus: Zinc finger BED domain-containing protein 3 (234 aa).

Positions alanine 19 to glycine 42 are disordered. A BED-type zinc finger spans residues alanine 43–serine 104. Positions 69, 72, 92, and 97 each coordinate Zn(2+). Disordered regions lie at residues arginine 94–glutamate 126 and arginine 202–aspartate 225. The span at proline 111–alanine 122 shows a compositional bias: pro residues. The span at leucine 216–aspartate 225 shows a compositional bias: basic and acidic residues.

Associates with the subcortical maternal complex (SCMC) composed of at least NLRP5, KHDC3L, OOEP, and TLE6 via interaction with NLRP5 and TLE6. Interacts with AXIN1; the interaction is direct, enhanced by protein kinase GSK3B and casein kinase CSNK1E activities and decreases GSK3B-induced beta-catenin serine and threonine phosphorylations. As to expression, secreted in blood plasma, and expressed in skeletal muscle and adipose tissue (at protein level).

The protein resides in the cytoplasm. The protein localises to the membrane. It localises to the secreted. Acts as a positive regulator in the activation of the canonical Wnt/beta-catenin signaling pathway by stabilizing cytoplasmic beta-catenin. Involved in transcription activation of Wnt target gene expression. Plays a role in symmetric division of blastomeres in the early stages of embryogenesis via regulation of mitotic spindle central positioning and organization of the F-actin filament network. Plays a role in regulating the distribution of cellular organelles, via modulation of cytoskeletal dynamics and cytoplasmic lattice formation. The sequence is that of Zinc finger BED domain-containing protein 3 (ZBED3) from Homo sapiens (Human).